The sequence spans 393 residues: Formate-dependent phosphoribosylglycinamide formyltransferase (393 aa).

N(1)-(5-phospho-beta-D-ribosyl)glycinamide contacts are provided by residues 22–23 (EL) and glutamate 82. ATP contacts are provided by residues arginine 114, lysine 155, 160–165 (SSGKGQ), 195–198 (EGFI), and glutamate 203. The ATP-grasp domain maps to 119 to 308 (RLAAEELDLP…QFALHARAIL (190 aa)). Residues glutamate 267 and glutamate 279 each coordinate Mg(2+). Residues aspartate 286, lysine 356, and 363–364 (RR) contribute to the N(1)-(5-phospho-beta-D-ribosyl)glycinamide site.

The protein belongs to the PurK/PurT family. Homodimer.

The enzyme catalyses N(1)-(5-phospho-beta-D-ribosyl)glycinamide + formate + ATP = N(2)-formyl-N(1)-(5-phospho-beta-D-ribosyl)glycinamide + ADP + phosphate + H(+). It functions in the pathway purine metabolism; IMP biosynthesis via de novo pathway; N(2)-formyl-N(1)-(5-phospho-D-ribosyl)glycinamide from N(1)-(5-phospho-D-ribosyl)glycinamide (formate route): step 1/1. Involved in the de novo purine biosynthesis. Catalyzes the transfer of formate to 5-phospho-ribosyl-glycinamide (GAR), producing 5-phospho-ribosyl-N-formylglycinamide (FGAR). Formate is provided by PurU via hydrolysis of 10-formyl-tetrahydrofolate. This chain is Formate-dependent phosphoribosylglycinamide formyltransferase, found in Pseudomonas putida (strain ATCC 47054 / DSM 6125 / CFBP 8728 / NCIMB 11950 / KT2440).